The chain runs to 500 residues: Glycerol kinase (500 aa).

ADP is bound at residue Thr15. Residues Thr15, Thr16, and Ser17 each coordinate ATP. Position 15 (Thr15) interacts with sn-glycerol 3-phosphate. Arg19 contacts ADP. Sn-glycerol 3-phosphate-binding residues include Arg85, Glu86, Tyr137, and Asp245. 5 residues coordinate glycerol: Arg85, Glu86, Tyr137, Asp245, and Gln246. The ADP site is built by Thr267 and Gly310. ATP contacts are provided by Thr267, Gly310, Gln314, and Gly411. Residues Gly411 and Asn415 each contribute to the ADP site.

This sequence belongs to the FGGY kinase family.

It carries out the reaction glycerol + ATP = sn-glycerol 3-phosphate + ADP + H(+). It participates in polyol metabolism; glycerol degradation via glycerol kinase pathway; sn-glycerol 3-phosphate from glycerol: step 1/1. Its activity is regulated as follows. Inhibited by fructose 1,6-bisphosphate (FBP). Functionally, key enzyme in the regulation of glycerol uptake and metabolism. Catalyzes the phosphorylation of glycerol to yield sn-glycerol 3-phosphate. The protein is Glycerol kinase of Aeromonas hydrophila subsp. hydrophila (strain ATCC 7966 / DSM 30187 / BCRC 13018 / CCUG 14551 / JCM 1027 / KCTC 2358 / NCIMB 9240 / NCTC 8049).